The following is a 193-amino-acid chain: dCTP deaminase (193 aa).

Residues 110-115, D128, 136-138, Y171, K178, and Q182 each bind dCTP; these read RSSLAR and VLE. Catalysis depends on E138, which acts as the Proton donor/acceptor. The tract at residues 169–193 is disordered; sequence RPYNRRQDAKYRDQQGAVASRIDKD.

This sequence belongs to the dCTP deaminase family. Homotrimer.

It carries out the reaction dCTP + H2O + H(+) = dUTP + NH4(+). The protein operates within pyrimidine metabolism; dUMP biosynthesis; dUMP from dCTP (dUTP route): step 1/2. Functionally, catalyzes the deamination of dCTP to dUTP. The sequence is that of dCTP deaminase from Cronobacter sakazakii (strain ATCC BAA-894) (Enterobacter sakazakii).